Here is a 409-residue protein sequence, read N- to C-terminus: F-box/kelch-repeat protein At2g44130 (409 aa).

One can recognise an F-box domain in the interval 17–63; that stretch reads HELIPGLPSELALECLVRVPFQFQSAMRSVCRSWRSLLSDSSFIQER. Kelch repeat units follow at residues 98–148, 151–199, 201–248, and 251–300; these read KKSE…VLQD, KILL…SVSP, KVYV…AVGM, and RFCV…RTAG.

The sequence is that of F-box/kelch-repeat protein At2g44130 from Arabidopsis thaliana (Mouse-ear cress).